The sequence spans 369 residues: MEEKVEDDFLDLDAVPETPVFDCVMDIKPEADPTSLTVKSMGLQERRGSNVSLTLDMCTPGCNEEGFGYLVSPREESAHEYLLSASRVLRAEELHEKALDPFLLQAEFFEIPMNFVDPKEYDIPGLVRKNRYKTILPNPHSRVRLTSPDPEDPLSSYINANYIRGYNGEEKVYIATQGPIVSTVVDFWRMVWQERTPIIVMITNIEEMNEKCTEYWPEEQVVHDGVEITVQKVIHTEDYRLRLISLRRGTEERGLKHYWFTSWPDQKTPDRAPPLLHLVREVEEAAQQEGPHCSPIIVHCSAGIGRTGCFIATSICCQQLRREGVVDILKTTCQLRQDRGGMIQTCEQYQFVHHAMSLYEKQLSLQSSE.

Residue Ser49 is modified to Phosphoserine; by PKA. Residue Thr59 is modified to Phosphothreonine; by MAPK. Ser72 bears the Phosphoserine; by MAPK mark. Residues 104–359 (LQAEFFEIPM…QFVHHAMSLY (256 aa)) enclose the Tyrosine-protein phosphatase domain. Residues Asp265, 300-306 (CSAGIGR), and Gln344 each bind substrate. The Phosphocysteine intermediate role is filled by Cys300.

Belongs to the protein-tyrosine phosphatase family. Non-receptor class subfamily. Post-translationally, phosphorylation at Ser-49 by PKA deactivates PTPN5. Phosphorylation at Thr-59 and Ser-72 by MAPKs stabilizes the phosphatase, dephosphorylation of these sites results in ubiquitin-mediated degradation of the active phosphatase. Expressed in the central nervous system except in the cerebellum. Enriched within the striatum relative to other brain areas.

It localises to the cytoplasm. It catalyses the reaction O-phospho-L-tyrosyl-[protein] + H2O = L-tyrosyl-[protein] + phosphate. Functionally, may regulate the activity of several effector molecules involved in synaptic plasticity and neuronal cell survival, including MAPKs, Src family kinases and NMDA receptors. The sequence is that of Tyrosine-protein phosphatase non-receptor type 5 (Ptpn5) from Rattus norvegicus (Rat).